The following is a 134-amino-acid chain: Small ribosomal subunit protein uS8 (134 aa).

The protein belongs to the universal ribosomal protein uS8 family. As to quaternary structure, part of the 30S ribosomal subunit. Contacts proteins S5 and S12.

In terms of biological role, one of the primary rRNA binding proteins, it binds directly to 16S rRNA central domain where it helps coordinate assembly of the platform of the 30S subunit. This is Small ribosomal subunit protein uS8 from Thermotoga sp. (strain RQ2).